We begin with the raw amino-acid sequence, 1439 residues long: DNA-directed RNA polymerase subunit beta' (1439 aa).

Zn(2+) contacts are provided by Cys70, Cys72, Cys85, and Cys88. Mg(2+) is bound by residues Asp504, Asp506, and Asp508. Positions 862, 936, 943, and 946 each coordinate Zn(2+).

It belongs to the RNA polymerase beta' chain family. The RNAP catalytic core consists of 2 alpha, 1 beta, 1 beta' and 1 omega subunit. When a sigma factor is associated with the core the holoenzyme is formed, which can initiate transcription. It depends on Mg(2+) as a cofactor. The cofactor is Zn(2+).

The enzyme catalyses RNA(n) + a ribonucleoside 5'-triphosphate = RNA(n+1) + diphosphate. Its function is as follows. DNA-dependent RNA polymerase catalyzes the transcription of DNA into RNA using the four ribonucleoside triphosphates as substrates. This is DNA-directed RNA polymerase subunit beta' from Gluconobacter oxydans (strain 621H) (Gluconobacter suboxydans).